We begin with the raw amino-acid sequence, 350 residues long: ATP-dependent (S)-NAD(P)H-hydrate dehydratase (350 aa).

The 308-residue stretch at 35-342 (LMQSVKRIIP…PEVGRAYEEL (308 aa)) folds into the YjeF C-terminal domain. (6S)-NADPHX is bound by residues G139 and 192-198 (NVAEFGR). Residues 230-234 (KGPVD) and 249-258 (GGLKRCGGQG) contribute to the ATP site. D259 contributes to the (6S)-NADPHX binding site.

Belongs to the NnrD/CARKD family. Requires Mg(2+) as cofactor.

It localises to the cytoplasm. It catalyses the reaction (6S)-NADHX + ATP = ADP + phosphate + NADH + H(+). The enzyme catalyses (6S)-NADPHX + ATP = ADP + phosphate + NADPH + H(+). Functionally, catalyzes the dehydration of the S-form of NAD(P)HX at the expense of ATP, which is converted to ADP. Together with NAD(P)HX epimerase, which catalyzes the epimerization of the S- and R-forms, the enzyme allows the repair of both epimers of NAD(P)HX, a damaged form of NAD(P)H that is a result of enzymatic or heat-dependent hydration. The chain is ATP-dependent (S)-NAD(P)H-hydrate dehydratase from Mycosarcoma maydis (Corn smut fungus).